The primary structure comprises 61 residues: Photosystem II reaction center protein K (61 aa).

The propeptide occupies 1 to 24 (MPNILSLTCICFNSVIYPTSFFFA). A helical membrane pass occupies residues 32 to 52 (IFNPIVDFMPVIPVLFFLLAF).

Belongs to the PsbK family. In terms of assembly, PSII is composed of 1 copy each of membrane proteins PsbA, PsbB, PsbC, PsbD, PsbE, PsbF, PsbH, PsbI, PsbJ, PsbK, PsbL, PsbM, PsbT, PsbX, PsbY, PsbZ, Psb30/Ycf12, at least 3 peripheral proteins of the oxygen-evolving complex and a large number of cofactors. It forms dimeric complexes.

It localises to the plastid. It is found in the chloroplast thylakoid membrane. Its function is as follows. One of the components of the core complex of photosystem II (PSII). PSII is a light-driven water:plastoquinone oxidoreductase that uses light energy to abstract electrons from H(2)O, generating O(2) and a proton gradient subsequently used for ATP formation. It consists of a core antenna complex that captures photons, and an electron transfer chain that converts photonic excitation into a charge separation. The polypeptide is Photosystem II reaction center protein K (Oryza nivara (Indian wild rice)).